Here is a 358-residue protein sequence, read N- to C-terminus: Triacylglycerol lipase (358 aa).

The first 39 residues, 1 to 39, serve as a signal peptide directing secretion; it reads MVRSMRSRVAARAVAWALAVMPLAGAAGLTMAASPAAVA. Residues 48–327 form the AB hydrolase-1 domain; it reads YPVILVHGLA…TSYHWNHLDE (280 aa). Leu-56 contacts substrate. The active-site Nucleophile is the Ser-126. Residue Gln-127 coordinates substrate. A disulfide bridge connects residues Cys-229 and Cys-308. Asp-280 serves as a coordination point for Ca(2+). Active-site charge relay system residues include Asp-302 and His-324. Ca(2+) is bound by residues Asp-326, Gln-330, and Val-334.

It belongs to the AB hydrolase superfamily. Pseudomonas lipase family. Monomer. Interacts with lipase-specific foldase Lif. Ca(2+) serves as cofactor.

Its subcellular location is the secreted. The catalysed reaction is a triacylglycerol + H2O = a diacylglycerol + a fatty acid + H(+). Functionally, catalyzes the hydrolysis of triacylglycerol. This chain is Triacylglycerol lipase, found in Burkholderia plantarii.